The chain runs to 423 residues: UDP-N-acetylglucosamine 1-carboxyvinyltransferase 2 (423 aa).

23–24 (KN) provides a ligand contact to phosphoenolpyruvate. Arginine 96 is a UDP-N-acetyl-alpha-D-glucosamine binding site. The active-site Proton donor is the cysteine 120. At cysteine 120 the chain carries 2-(S-cysteinyl)pyruvic acid O-phosphothioketal. UDP-N-acetyl-alpha-D-glucosamine-binding positions include 125 to 129 (RPIDL), aspartate 309, and valine 331.

The protein belongs to the EPSP synthase family. MurA subfamily.

The protein localises to the cytoplasm. It catalyses the reaction phosphoenolpyruvate + UDP-N-acetyl-alpha-D-glucosamine = UDP-N-acetyl-3-O-(1-carboxyvinyl)-alpha-D-glucosamine + phosphate. It functions in the pathway cell wall biogenesis; peptidoglycan biosynthesis. Functionally, cell wall formation. Adds enolpyruvyl to UDP-N-acetylglucosamine. This Streptococcus agalactiae serotype III (strain NEM316) protein is UDP-N-acetylglucosamine 1-carboxyvinyltransferase 2.